Consider the following 690-residue polypeptide: Methionine--tRNA ligase 1 (690 aa).

Positions Pro11–His21 match the 'HIGH' region motif. Positions 142, 145, 155, and 158 each coordinate Zn(2+). The 'KMSKS' region motif lies at Lys328–Ser332. Lys331 contacts ATP. Residues Asp590–His690 form the tRNA-binding domain.

The protein belongs to the class-I aminoacyl-tRNA synthetase family. MetG type 1 subfamily. In terms of assembly, homodimer. Zn(2+) serves as cofactor.

Its subcellular location is the cytoplasm. It carries out the reaction tRNA(Met) + L-methionine + ATP = L-methionyl-tRNA(Met) + AMP + diphosphate. In terms of biological role, is required not only for elongation of protein synthesis but also for the initiation of all mRNA translation through initiator tRNA(fMet) aminoacylation. In Sorangium cellulosum (strain So ce56) (Polyangium cellulosum (strain So ce56)), this protein is Methionine--tRNA ligase 1.